A 108-amino-acid polypeptide reads, in one-letter code: Small ribosomal subunit protein mS33 (108 aa).

The disordered stretch occupies residues leucine 84 to lysine 108.

The protein belongs to the mitochondrion-specific ribosomal protein mS33 family. As to quaternary structure, component of the mitochondrial small ribosomal subunit (mt-SSU). Mature N.crassa 74S mitochondrial ribosomes consist of a small (37S) and a large (54S) subunit. The 37S small subunit contains a 16S ribosomal RNA (16S mt-rRNA) and 32 different proteins. The 54S large subunit contains a 23S rRNA (23S mt-rRNA) and 42 different proteins.

The protein resides in the mitochondrion. Functionally, component of the mitochondrial ribosome (mitoribosome), a dedicated translation machinery responsible for the synthesis of mitochondrial genome-encoded proteins, including at least some of the essential transmembrane subunits of the mitochondrial respiratory chain. The mitoribosomes are attached to the mitochondrial inner membrane and translation products are cotranslationally integrated into the membrane. This is Small ribosomal subunit protein mS33 (rsm27) from Neurospora crassa (strain ATCC 24698 / 74-OR23-1A / CBS 708.71 / DSM 1257 / FGSC 987).